A 37-amino-acid polypeptide reads, in one-letter code: Large ribosomal subunit protein bL36c (37 aa).

Belongs to the bacterial ribosomal protein bL36 family.

It localises to the plastid. It is found in the chloroplast. The protein is Large ribosomal subunit protein bL36c of Physcomitrium patens (Spreading-leaved earth moss).